The primary structure comprises 720 residues: Heat shock protein homolog pss1 (720 aa).

Position 38 is a phosphoserine (Ser-38). Thr-39 is subject to Phosphothreonine. Over residues 658 to 690 the composition is skewed to basic and acidic residues; it reads KRQKVQAEREAAKAATKSEAEKQKPSGKFEEGT. The interval 658–720 is disordered; that stretch reads KRQKVQAERE…ETMEIDEQKE (63 aa). The segment covering 703-720 has biased composition (acidic residues); that stretch reads VAPENEEVETMEIDEQKE.

The protein belongs to the heat shock protein 70 family.

Its subcellular location is the cytoplasm. Required for normal growth at various temperatures. This is Heat shock protein homolog pss1 (pss1) from Schizosaccharomyces pombe (strain 972 / ATCC 24843) (Fission yeast).